Consider the following 308-residue polypeptide: tRNA dimethylallyltransferase (308 aa).

8–15 contacts ATP; sequence GATAVGKT. 10–15 serves as a coordination point for substrate; it reads TAVGKT. The interaction with substrate tRNA stretch occupies residues 33 to 36; that stretch reads DSRQ.

It belongs to the IPP transferase family. As to quaternary structure, monomer. It depends on Mg(2+) as a cofactor.

The catalysed reaction is adenosine(37) in tRNA + dimethylallyl diphosphate = N(6)-dimethylallyladenosine(37) in tRNA + diphosphate. Its function is as follows. Catalyzes the transfer of a dimethylallyl group onto the adenine at position 37 in tRNAs that read codons beginning with uridine, leading to the formation of N6-(dimethylallyl)adenosine (i(6)A). In Kosmotoga olearia (strain ATCC BAA-1733 / DSM 21960 / TBF 19.5.1), this protein is tRNA dimethylallyltransferase.